The chain runs to 1070 residues: DNA-directed RNA polymerase subunit beta (1070 aa).

The protein belongs to the RNA polymerase beta chain family. In plastids the minimal PEP RNA polymerase catalytic core is composed of four subunits: alpha, beta, beta', and beta''. When a (nuclear-encoded) sigma factor is associated with the core the holoenzyme is formed, which can initiate transcription.

The protein localises to the plastid. It is found in the chloroplast. The enzyme catalyses RNA(n) + a ribonucleoside 5'-triphosphate = RNA(n+1) + diphosphate. In terms of biological role, DNA-dependent RNA polymerase catalyzes the transcription of DNA into RNA using the four ribonucleoside triphosphates as substrates. This Nandina domestica (Heavenly bamboo) protein is DNA-directed RNA polymerase subunit beta.